The primary structure comprises 410 residues: Metacaspase-1 (410 aa).

The interval 1–94 is disordered; sequence MFPGSGRQTY…RQSGAMNDVS (94 aa). 2 stretches are compositionally biased toward low complexity: residues 21-47 and 55-64; these read APQY…YNGP and NYNYGHYGPP. Over residues 65 to 75 the composition is skewed to gly residues; it reads QGQGQGYGQGG. Over residues 80–94 the composition is skewed to polar residues; that stretch reads MYNNNRQSGAMNDVS. Residues His200 and Cys256 contribute to the active site.

It belongs to the peptidase C14B family.

Functionally, involved in cell death (apoptosis). The polypeptide is Metacaspase-1 (MCA1) (Meyerozyma guilliermondii (strain ATCC 6260 / CBS 566 / DSM 6381 / JCM 1539 / NBRC 10279 / NRRL Y-324) (Yeast)).